Reading from the N-terminus, the 123-residue chain is Large ribosomal subunit protein uL14c (123 aa).

It belongs to the universal ribosomal protein uL14 family. Part of the 50S ribosomal subunit.

The protein resides in the plastid. The protein localises to the chloroplast. Its function is as follows. Binds to 23S rRNA. The sequence is that of Large ribosomal subunit protein uL14c from Lolium perenne (Perennial ryegrass).